An 89-amino-acid chain; its full sequence is Putative septation protein SpoVG (89 aa).

This sequence belongs to the SpoVG family.

Its function is as follows. Could be involved in septation. In Heliobacterium modesticaldum (strain ATCC 51547 / Ice1), this protein is Putative septation protein SpoVG.